Here is a 221-residue protein sequence, read N- to C-terminus: MATSIDVVDLKGKKAGSIELPDSLFDVQTNIPLIHQVVTAQLAAARQGTHKTKNRGEVSGAGRKPFKQKGTGRARQGSIRAPQMTGGGIVHGPTPRDYSQRTPKKMIAAALLGALSDRARGSRIHAVQAFTAGEAPSTKAVVELLSGVATSKHVLVVLERDDELAFKSVRNIASVHALTYDQLNAYDVLVSDDIVFTQAALEGFIAAKSTSAATKKEEVNA.

Residues 45-100 are disordered; it reads ARQGTHKTKNRGEVSGAGRKPFKQKGTGRARQGSIRAPQMTGGGIVHGPTPRDYSQ.

It belongs to the universal ribosomal protein uL4 family. In terms of assembly, part of the 50S ribosomal subunit.

In terms of biological role, one of the primary rRNA binding proteins, this protein initially binds near the 5'-end of the 23S rRNA. It is important during the early stages of 50S assembly. It makes multiple contacts with different domains of the 23S rRNA in the assembled 50S subunit and ribosome. Forms part of the polypeptide exit tunnel. This chain is Large ribosomal subunit protein uL4, found in Leifsonia xyli subsp. xyli (strain CTCB07).